Consider the following 364-residue polypeptide: MANKTVLFNKHLESDAKMVDFHGWDMPLNYGSQIEEHNAVRQDAGMFDVSHMTVVDVTGTDACAFLRKLLANDVAKLKVPGKALYGGMLDHNAGVIDDLITYYLTDTHYRVVVNSATREKDLAWIAEQVKGFDVEIVERPELAMIAVQGPNAKAKAATVFNDAQNAAVEGMKPFFGVQADSLFIATTGYTGETGYEIIVPEDEAQALWQGLLEAGVKPCGLGARDTLRLEAGMNLYGLDMDETVNPLAANMGWTIAWEPQDRDFNGREALAAIKAAGTEKLVGLIMEAKGVIRPGMSVFFTDGEGVEQQGTITSGTFSPTLGYSIAMARVPRSIGDTAEVEMRKKRVSVKVVAPSFVRNGKQAF.

Belongs to the GcvT family. In terms of assembly, the glycine cleavage system is composed of four proteins: P, T, L and H.

The enzyme catalyses N(6)-[(R)-S(8)-aminomethyldihydrolipoyl]-L-lysyl-[protein] + (6S)-5,6,7,8-tetrahydrofolate = N(6)-[(R)-dihydrolipoyl]-L-lysyl-[protein] + (6R)-5,10-methylene-5,6,7,8-tetrahydrofolate + NH4(+). Functionally, the glycine cleavage system catalyzes the degradation of glycine. This Shewanella sediminis (strain HAW-EB3) protein is Aminomethyltransferase.